Consider the following 154-residue polypeptide: Methylglyoxal synthase (154 aa).

The MGS-like domain maps to 6–154 (SPLPANKAIA…AYMARRAQGN (149 aa)). Substrate is bound by residues H19, K23, 45-48 (TGTT), and 65-66 (SG). The active-site Proton donor/acceptor is D71. H98 contributes to the substrate binding site.

This sequence belongs to the methylglyoxal synthase family.

The catalysed reaction is dihydroxyacetone phosphate = methylglyoxal + phosphate. Its function is as follows. Catalyzes the formation of methylglyoxal from dihydroxyacetone phosphate. This is Methylglyoxal synthase from Cellvibrio japonicus (strain Ueda107) (Pseudomonas fluorescens subsp. cellulosa).